The chain runs to 449 residues: Glycoprotein endo-alpha-1,2-mannosidase (449 aa).

Over 1 to 8 the chain is Cytoplasmic; sequence MIRFRRRT. Residues 9 to 29 traverse the membrane as a helical; Signal-anchor for type II membrane protein segment; sequence CITLSIFIFLVCLIMAGLKHL. The Lumenal portion of the chain corresponds to 30 to 449; the sequence is RPENAAFGSP…YMKEKEHWLV (420 aa). Residues 59–449 form a catalytic region; that stretch reads DSENHLKGNT…YMKEKEHWLV (391 aa).

It belongs to the glycosyl hydrolase 99 family.

It is found in the golgi apparatus membrane. The enzyme catalyses N-{alpha-Glc-(1-&gt;3)-alpha-Man-(1-&gt;2)-alpha-Man-(1-&gt;2)-alpha-Man-(1-&gt;3)-[alpha-Man-(1-&gt;2)-alpha-Man-(1-&gt;3)-[alpha-Man-(1-&gt;2)-alpha-Man-(1-&gt;6)]-alpha-Man-(1-&gt;6)]-beta-Man-(1-&gt;4)-beta-GlcNAc-(1-&gt;4)-beta-GlcNAc}-L-asparaginyl-[protein] + H2O = alpha-D-glucosyl-(1-&gt;3)-D-mannopyranose + N(4)-{alpha-D-Man-(1-&gt;2)-alpha-D-Man-(1-&gt;3)-[alpha-D-Man-(1-&gt;2)-alpha-D-Man-(1-&gt;3)-[alpha-D-Man-(1-&gt;2)-alpha-D-Man-(1-&gt;6)]-alpha-D-Man-(1-&gt;6)]-beta-D-Man-(1-&gt;4)-beta-D-GlaNAc-(1-&gt;4)-beta-D-GlcNAc}-L-asparaginyl-[protein] (N-glucan mannose isomer 8A1,2,3B1,2). The protein is Glycoprotein endo-alpha-1,2-mannosidase (manea) of Xenopus laevis (African clawed frog).